A 2224-amino-acid chain; its full sequence is Coagulation factor V (2224 aa).

A signal peptide spans M1–A28. 4 Plastocyanin-like domains span residues Q30–C193, T203–C329, K348–C526, and I536–C684. 2 consecutive F5/8 type A domains span residues Q30–C329 and K348–C684. N-linked (GlcNAc...) asparagine glycans are attached at residues N51 and N55. Ca(2+)-binding residues include D139 and D140. C167 and C193 are oxidised to a cystine. N239, N297, N382, N460, and N468 each carry an N-linked (GlcNAc...) asparagine glycan. The cysteines at positions 248 and 329 are disulfide-linked. C500 and C526 are oxidised to a cystine. An N-linked (GlcNAc...) asparagine glycan is attached at N554. The cysteines at positions 603 and 684 are disulfide-linked. T640 bears the Phosphothreonine mark. The b stretch occupies residues S692–R1573. Sulfotyrosine occurs at positions 693, 724, and 726. A propeptide spans S738–R1573 (activation peptide (connecting region)). N-linked (GlcNAc...) asparagine glycans are attached at residues N741, N752, N760, N776, and N782. The O-linked (GalNAc...) threonine glycan is linked to T805. N821 is a glycosylation site (N-linked (GlcNAc...) asparagine). Residues S822–Y831 show a composition bias toward polar residues. Positions S822 to P842 are disordered. Phosphoserine; by FAM20C is present on S859. Positions L894–P927 are disordered. 2 consecutive repeat copies span residues S895–P911 and S912–P928. A 2 X 17 AA tandem repeats region spans residues S895 to P928. N938 and N977 each carry an N-linked (GlcNAc...) asparagine glycan. 2 disordered regions span residues W982–F1001 and T1029–F1048. Residues T1029–H1040 show a composition bias toward basic residues. N-linked (GlcNAc...) asparagine glycans are attached at residues N1074, N1083, N1103, and N1106. Residues L1097–L1157 form a disordered region. The span at D1099–A1111 shows a compositional bias: polar residues. Over residues H1139 to S1154 the composition is skewed to low complexity. Repeat copies occupy residues V1185–V1193, T1194–T1202, N1203–T1211, T1212–R1220, N1221–M1229, P1230–T1238, T1239–T1247, T1248–T1256, N1257–T1265, N1266–M1274, P1275–T1283, T1284–T1292, N1293–M1301, T1302–T1310, N1311–M1319, P1320–T1328, T1329–T1337, N1338–T1346, N1347–M1355, P1356–T1364, T1365–T1373, N1374–T1382, N1383–M1391, P1392–I1400, P1401–M1409, T1410–T1418, D1419–M1427, S1428–V1436, T1437–T1445, T1446–I1454, S1455–I1463, F1464–S1472, L1473–S1481, F1482–M1490, and P1493–T1501. The segment at V1185 to T1501 is 35 X 9 AA approximate tandem repeats of [TNP]-L-S-P-D-L-S-Q-T. The interval P1341 to S1367 is disordered. A glycan (N-linked (GlcNAc...) asparagine) is linked at N1479. N-linked (GlcNAc...) asparagine glycosylation is present at N1499. Residues Y1522, Y1538, and Y1543 each carry the sulfotyrosine modification. N-linked (GlcNAc...) asparagine glycosylation is present at N1559. Plastocyanin-like domains follow at residues N1578–C1751 and N1761–C1907. An F5/8 type A 3 domain is found at N1578–C1907. Y1593 carries the post-translational modification Sulfotyrosine. Residue N1703 is glycosylated (N-linked (GlcNAc...) asparagine). C1725 and C1751 are disulfide-bonded. Residues H1843 and H1845 each contribute to the Cu cation site. Disulfide bonds link C1907–C2061 and C2066–C2221. F5/8 type C domains are found at residues C1907–C2061 and C2066–C2221. 2 N-linked (GlcNAc...) asparagine glycosylation sites follow: N2010 and N2209.

This sequence belongs to the multicopper oxidase family. As to quaternary structure, factor Va, the activated form of factor V, is composed of a heavy chain and a light chain, non-covalently bound. The interaction between the two chains is calcium-dependent. Forms heterodimer with SERPINA5. Thrombin activates factor V proteolytically to the active cofactor, factor Va (formation of a heavy chain at the N-terminus and a light chain at the C-terminus). In terms of processing, sulfation is required for efficient thrombin cleavage and activation and for full procoagulant activity. Post-translationally, activated protein C inactivates factor V and factor Va by proteolytic degradation. Phosphorylated by FAM20C in the extracellular medium. In terms of tissue distribution, plasma.

The protein resides in the secreted. Its activity is regulated as follows. Inhibited by SERPINA5. Central regulator of hemostasis. It serves as a critical cofactor for the prothrombinase activity of factor Xa that results in the activation of prothrombin to thrombin. The polypeptide is Coagulation factor V (F5) (Homo sapiens (Human)).